A 1714-amino-acid polypeptide reads, in one-letter code: uncharacterized protein (1714 aa).

Disordered stretches follow at residues 47–70 (SVAG…SDDL) and 584–616 (KKTG…KSKK). ATP contacts are provided by residues 607 to 614 (ATKESGKS) and 806 to 813 (APTSAGKT). Basic and acidic residues predominate over residues 607–616 (ATKESGKSKK). A Helicase ATP-binding domain is found at 793-963 (LDSVDRGNSA…WLNSSEQAKS (171 aa)). The DEVH box motif lies at 913–916 (DEVH). A disordered region spans residues 1197–1223 (KRKRDDAEKKKKGDKDEDAGPEKDDDE). Positions 1199–1218 (KRDDAEKKKKGDKDEDAGPE) are enriched in basic and acidic residues. Positions 1237–1391 (ALERFKLRGR…NPPFTVLFLL (155 aa)) constitute a Helicase C-terminal domain.

It belongs to the helicase family. SKI2 subfamily.

Its subcellular location is the nucleus. This is an uncharacterized protein from Caenorhabditis elegans.